A 234-amino-acid chain; its full sequence is Myelin protein zero-like protein 3 (234 aa).

A signal peptide spans 1–31 (MQQSGVPGSRGCALCPLLGVLFFQGVYVIFS). The Ig-like V-type domain maps to 32–148 (LEIKADAHVR…NIPATELTVT (117 aa)). The Extracellular segment spans residues 32–158 (LEIKADAHVR…ERGFGTMLSS (127 aa)). An intrachain disulfide couples C52 to C128. N-linked (GlcNAc...) asparagine glycosylation is present at N123. A helical transmembrane segment spans residues 159-179 (VALLSILVFIPSTVVVILLLV). Residues 180–234 (RMGRKSAGLKKRSKSGYKKSSIEVSDDTDQEGDDCMAKLCVRCAECVDSDYEETY) are Cytoplasmic-facing.

This sequence belongs to the myelin P0 protein family.

The protein localises to the membrane. Its function is as follows. Mediates homophilic cell-cell adhesion. The sequence is that of Myelin protein zero-like protein 3 (MPZL3) from Bos taurus (Bovine).